We begin with the raw amino-acid sequence, 729 residues long: Kinesin-like protein KAR3 (729 aa).

Positions 1–48 are disordered; that stretch reads MESLPRTPTKGRSTQHLSTPSPKNDILAMNGHKRRNTTTPPPKHTLLK. The tract at residues 1 to 109 is globular; it reads MESLPRTPTK…ENVNELNRTQ (109 aa). The segment covering 10-22 has biased composition (polar residues); sequence KGRSTQHLSTPSP. Residues 110–357 adopt a coiled-coil conformation; that stretch reads AILFEKKATL…LEEYIKDTEL (248 aa). Residues N386, R388, R392, E454, G477, S478, G479, K480, T481, F482, E554, K579, and T694 each coordinate ATP. One can recognise a Kinesin motor domain in the interval 386 to 723; the sequence is NIRVYCRIRP…LRFASKVNST (338 aa).

Belongs to the TRAFAC class myosin-kinesin ATPase superfamily. Kinesin family. NCD subfamily. In terms of assembly, interacts with CIK1; the interaction is direct. Interacts with VIK1; the interaction is direct.

It localises to the cytoplasm. Its subcellular location is the cytoskeleton. The protein localises to the microtubule organizing center. It is found in the spindle pole body. The protein resides in the nucleus. It localises to the chromosome. Its subcellular location is the spindle. It catalyses the reaction ATP + H2O = ADP + phosphate + H(+). The enzyme catalyses ATP + H2O + a kinesin associated with a microtubule at position (n) = ADP + phosphate + a kinesin associated with a microtubule at position (n-1, toward the minus end).. Its function is as follows. Minus end-directed microtubule (MT) motor involved in spindle midzone assembly, poleward transport of newly captured kinetochores along the lateral side of MTs, karyogamy (nuclear fusion) during mating, and with an essential function in meiosis I. Functions together with the accessory proteins CIK1 or VIK1. Drives the poleward transport of newly captured kinetochores along the lateral side of MTs, both during S-phase and during M-phase. To contribute to spindle midzone assembly during mitotic metaphase, the nuclear KAR3-CIK1 motor cross-links anti-parallel microtubules to align them on the spindle axis; as the motor travels polewards splayed microtubules are pulled into alignment. During the karyogamy (nuclear fusion) step of mating, KAR3-CIK1 cross-links antiparallel cytoplasmic microtubules emanating from the spindle pole bodies of mating partners; the motor activity of KAR3 creates the force that pulls the nuclei together by sliding cross-linked microtubules past one another. KAR3-CIK1 promotes microtubule shortening predominantly from the microtubule plus-end. Together with cytoplasmic VIK1, may act to stabilize microtubules. Requires accessory protein VIK1 for spindle pole body localization and to allow the CIN8 and KIP1 motors to generate outwardly directed spindle forces. Essential during meiosis I. The ATPase activity is stimulated by microtubule-binding. The chain is Kinesin-like protein KAR3 (KAR3) from Saccharomyces cerevisiae (strain ATCC 204508 / S288c) (Baker's yeast).